Consider the following 483-residue polypeptide: tRNA sulfurtransferase (483 aa).

A THUMP domain is found at 61–165 (AEVLEILTTT…DELLNQVIAR (105 aa)). ATP is bound by residues 183–184 (LI), Lys-265, Gly-287, and Gln-296. Cys-344 and Cys-457 form a disulfide bridge. The region spanning 405–483 (EEGNAVVLDI…GFNNVKVYRP (79 aa)) is the Rhodanese domain. The Cysteine persulfide intermediate role is filled by Cys-457.

Belongs to the ThiI family.

The protein resides in the cytoplasm. It catalyses the reaction [ThiI sulfur-carrier protein]-S-sulfanyl-L-cysteine + a uridine in tRNA + 2 reduced [2Fe-2S]-[ferredoxin] + ATP + H(+) = [ThiI sulfur-carrier protein]-L-cysteine + a 4-thiouridine in tRNA + 2 oxidized [2Fe-2S]-[ferredoxin] + AMP + diphosphate. The enzyme catalyses [ThiS sulfur-carrier protein]-C-terminal Gly-Gly-AMP + S-sulfanyl-L-cysteinyl-[cysteine desulfurase] + AH2 = [ThiS sulfur-carrier protein]-C-terminal-Gly-aminoethanethioate + L-cysteinyl-[cysteine desulfurase] + A + AMP + 2 H(+). It participates in cofactor biosynthesis; thiamine diphosphate biosynthesis. Functionally, catalyzes the ATP-dependent transfer of a sulfur to tRNA to produce 4-thiouridine in position 8 of tRNAs, which functions as a near-UV photosensor. Also catalyzes the transfer of sulfur to the sulfur carrier protein ThiS, forming ThiS-thiocarboxylate. This is a step in the synthesis of thiazole, in the thiamine biosynthesis pathway. The sulfur is donated as persulfide by IscS. In Vibrio cholerae serotype O1 (strain ATCC 39315 / El Tor Inaba N16961), this protein is tRNA sulfurtransferase.